Here is a 437-residue protein sequence, read N- to C-terminus: CCA-adding enzyme (437 aa).

The ATP site is built by Ser47 and Arg50. CTP-binding residues include Ser47 and Arg50. Residues Glu59, Asp61, and Asp110 each coordinate Mg(2+). ATP contacts are provided by His133, Lys152, and Tyr161. His133, Lys152, and Tyr161 together coordinate CTP.

This sequence belongs to the tRNA nucleotidyltransferase/poly(A) polymerase family. Archaeal CCA-adding enzyme subfamily. In terms of assembly, homodimer. It depends on Mg(2+) as a cofactor.

It carries out the reaction a tRNA precursor + 2 CTP + ATP = a tRNA with a 3' CCA end + 3 diphosphate. It catalyses the reaction a tRNA with a 3' CCA end + 2 CTP + ATP = a tRNA with a 3' CCACCA end + 3 diphosphate. Catalyzes the addition and repair of the essential 3'-terminal CCA sequence in tRNAs without using a nucleic acid template. Adds these three nucleotides in the order of C, C, and A to the tRNA nucleotide-73, using CTP and ATP as substrates and producing inorganic pyrophosphate. tRNA 3'-terminal CCA addition is required both for tRNA processing and repair. Also involved in tRNA surveillance by mediating tandem CCA addition to generate a CCACCA at the 3' terminus of unstable tRNAs. While stable tRNAs receive only 3'-terminal CCA, unstable tRNAs are marked with CCACCA and rapidly degraded. The structural flexibility of RNA controls the choice between CCA versus CCACCA addition: following the first CCA addition cycle, nucleotide-binding to the active site triggers a clockwise screw motion, producing torque on the RNA. This ejects stable RNAs, whereas unstable RNAs are refolded while bound to the enzyme and subjected to a second CCA catalytic cycle. This Archaeoglobus fulgidus (strain ATCC 49558 / DSM 4304 / JCM 9628 / NBRC 100126 / VC-16) protein is CCA-adding enzyme.